A 607-amino-acid chain; its full sequence is Bifunctional lysine-specific demethylase and histidyl-hydroxylase NO66 (607 aa).

Disordered stretches follow at residues 23-121 (GPTI…IKTN) and 139-184 (ATQH…GEVE). Positions 25–37 (TIQQTGATKTPKT) are enriched in polar residues. Over residues 39–58 (SKIRRLSIRKSTRKIKHALK) the composition is skewed to basic residues. Residues 156-167 (DKTPVKRVRSDT) are compositionally biased toward basic and acidic residues. Residues 188–405 (EEAEKMFEWL…DLMEKLVPAA (218 aa)) form the JmjC domain. 3 residues coordinate Fe cation: H328, D330, and H371.

It belongs to the ROX family. NO66 subfamily. It depends on Fe(2+) as a cofactor.

Its subcellular location is the nucleus. The catalysed reaction is L-histidyl-[protein] + 2-oxoglutarate + O2 = (3S)-3-hydroxy-L-histidyl-[protein] + succinate + CO2. It catalyses the reaction N(6),N(6)-dimethyl-L-lysyl(36)-[histone H3] + 2 2-oxoglutarate + 2 O2 = L-lysyl(36)-[histone H3] + 2 formaldehyde + 2 succinate + 2 CO2. Its function is as follows. Oxygenase that can act as both a histone lysine demethylase and a ribosomal histidine hydroxylase. Specifically demethylates 'Lys-4' (H3K4me) and 'Lys-36' (H3K36me) of histone H3, thereby playing a central role in histone code. Also catalyzes the hydroxylation of 60S ribosomal protein L8. The protein is Bifunctional lysine-specific demethylase and histidyl-hydroxylase NO66 of Branchiostoma floridae (Florida lancelet).